Reading from the N-terminus, the 220-residue chain is MTSIAHLRKSYERAELSEDASHADPLQQFEKWLKEAISAEIPEPNAMTVATVASNLRPSTRVVLIKGYDERGITWFTNYDSRKGQELAGNPYAALQFHWVELERVVRIEGIVEKVSEEESDSYFHSRPLDSRIGAWASPQSQVISGRSVLVANAAKYGAKFLLNPPRPPHWGGYRLKPDHWQFWQGRKSRLHDRLRYTLIEPASTLPDAKPVWIRERLAP.

Substrate is bound by residues 8–11 (RKSY) and K66. Residues 61–66 (RVVLIK), 76–77 (FT), R82, and K83 each bind FMN. Y123, R127, and S131 together coordinate substrate. FMN-binding positions include 140 to 141 (QS) and W184. 190 to 192 (RLH) is a binding site for substrate. An FMN-binding site is contributed by R194.

This sequence belongs to the pyridoxamine 5'-phosphate oxidase family. Homodimer. The cofactor is FMN.

It carries out the reaction pyridoxamine 5'-phosphate + O2 + H2O = pyridoxal 5'-phosphate + H2O2 + NH4(+). The catalysed reaction is pyridoxine 5'-phosphate + O2 = pyridoxal 5'-phosphate + H2O2. It participates in cofactor metabolism; pyridoxal 5'-phosphate salvage; pyridoxal 5'-phosphate from pyridoxamine 5'-phosphate: step 1/1. It functions in the pathway cofactor metabolism; pyridoxal 5'-phosphate salvage; pyridoxal 5'-phosphate from pyridoxine 5'-phosphate: step 1/1. Functionally, catalyzes the oxidation of either pyridoxine 5'-phosphate (PNP) or pyridoxamine 5'-phosphate (PMP) into pyridoxal 5'-phosphate (PLP). This Albidiferax ferrireducens (strain ATCC BAA-621 / DSM 15236 / T118) (Rhodoferax ferrireducens) protein is Pyridoxine/pyridoxamine 5'-phosphate oxidase.